Here is a 479-residue protein sequence, read N- to C-terminus: Anaerobic nitric oxide reductase flavorubredoxin (479 aa).

Residues 30-210 form a zinc metallo-hydrolase region; it reads LRGSSYNSYL…PFSRLVTPKI (181 aa). The Fe cation site is built by H79, E81, D83, H147, D166, and H227. Residues 254–393 enclose the Flavodoxin-like domain; the sequence is ITIFYDTMSN…LCREHGREIA (140 aa). FMN contacts are provided by residues 260-264 and 342-369; these read TMSNN and AFGS…EMSL. Positions 423–474 constitute a Rubredoxin-like domain; it reads GPRMQCSVCQWIYDPAKGEPMQDVAPGTPWSEVPDNFLCPECSLGKDVFEEL. Fe cation contacts are provided by C428, C431, C461, and C464.

The protein in the N-terminal section; belongs to the zinc metallo-hydrolase group 3 family. In terms of assembly, homotetramer. Requires Fe cation as cofactor. It depends on FMN as a cofactor.

The protein resides in the cytoplasm. It participates in nitrogen metabolism; nitric oxide reduction. Anaerobic nitric oxide reductase; uses NADH to detoxify nitric oxide (NO), protecting several 4Fe-4S NO-sensitive enzymes. Has at least 2 reductase partners, only one of which (NorW, flavorubredoxin reductase) has been identified. NO probably binds to the di-iron center; electrons enter from the NorW at rubredoxin and are transferred sequentially to the FMN center and the di-iron center. Also able to function as an aerobic oxygen reductase. This is Anaerobic nitric oxide reductase flavorubredoxin from Escherichia coli O139:H28 (strain E24377A / ETEC).